Consider the following 138-residue polypeptide: Proofreading thioesterase EntH (138 aa).

The active-site Nucleophile or proton acceptor is the E64.

It belongs to the thioesterase PaaI family. In terms of assembly, homotetramer. Dimer of dimers. Interacts specifically with the aryl carrier protein (ArCP) domain of EntB.

The protein resides in the cytoplasm. The protein operates within siderophore biosynthesis; enterobactin biosynthesis. Required for optimal enterobactin synthesis. Acts as a proofreading enzyme that prevents EntB misacylation by hydrolyzing the thioester bound existing between EntB and wrongly charged molecules. The protein is Proofreading thioesterase EntH of Citrobacter rodentium (strain ICC168) (Citrobacter freundii biotype 4280).